The primary structure comprises 179 residues: Transthyretin-like protein 46 (179 aa).

The first 17 residues, 1 to 17, serve as a signal peptide directing secretion; the sequence is MNKLFVLLIALLGLTAA. The interval 144-179 is disordered; that stretch reads RRGGFNADYMDPDNSEKDQSKSSEESEDKEKTVETF. Residues 157–179 show a composition bias toward basic and acidic residues; it reads NSEKDQSKSSEESEDKEKTVETF.

This sequence belongs to the nematode transthyretin-like family.

It localises to the secreted. In Caenorhabditis elegans, this protein is Transthyretin-like protein 46 (ttr-46).